The chain runs to 219 residues: Lipid A acyltransferase PagP (219 aa).

Residues 1-28 (MRLILISHSRLFALSALFLIPTFDSLSA) form the signal peptide. A disordered region spans residues 39–63 (IDRTTQSDSTTQRDSKTRRDPAPSF). Residues 49–59 (TQRDSKTRRDP) are compositionally biased toward basic and acidic residues. Residues H91, D134, and S135 contribute to the active site.

Belongs to the lipid A palmitoyltransferase family. As to quaternary structure, homodimer.

It is found in the cell outer membrane. The enzyme catalyses a lipid A + a 1,2-diacyl-sn-glycero-3-phosphocholine = a hepta-acyl lipid A + a 2-acyl-sn-glycero-3-phosphocholine. It catalyses the reaction a lipid IVA + a 1,2-diacyl-sn-glycero-3-phosphocholine = a lipid IVB + a 2-acyl-sn-glycero-3-phosphocholine. The catalysed reaction is a lipid IIA + a 1,2-diacyl-sn-glycero-3-phosphocholine = a lipid IIB + a 2-acyl-sn-glycero-3-phosphocholine. Transfers a fatty acid residue from the sn-1 position of a phospholipid to the N-linked hydroxyfatty acid chain on the proximal unit of lipid A or its precursors. This is Lipid A acyltransferase PagP from Dickeya zeae (strain Ech586) (Dickeya dadantii (strain Ech586)).